Reading from the N-terminus, the 248-residue chain is Transcription factor MYBC1 (248 aa).

The myb-like GARP DNA-binding region spans 102 to 161 (TLKRPRLVWTPQLHKRFVDAVGHLGIKNAVPKTIMQLMSVEGLTRENVASHLQKYRLYLR).

In terms of tissue distribution, expressed in roots, leaves, stems, petioles, filaments, stigma, pedicels, sepals, anthers, petals, and siliques.

The protein localises to the nucleus. In terms of biological role, probable transcription factor that acts as a negative regulator of freezing tolerance via a CBF-independent pathway. The polypeptide is Transcription factor MYBC1 (Arabidopsis thaliana (Mouse-ear cress)).